A 234-amino-acid polypeptide reads, in one-letter code: Sugar fermentation stimulation protein A (234 aa).

The H-T-H motif DNA-binding region spans 201-220 (LLSEAQQRGVEILAYKAEIS).

It belongs to the SfsA family.

Functionally, binds to DNA non-specifically. Could be a regulatory factor involved in maltose metabolism. This is Sugar fermentation stimulation protein A from Escherichia coli (strain 55989 / EAEC).